The following is a 343-amino-acid chain: Anthranilate phosphoribosyltransferase (343 aa).

5-phospho-alpha-D-ribose 1-diphosphate is bound by residues glycine 79, 82 to 83 (GD), threonine 87, 89 to 92 (NVST), 106 to 114 (KHGNRAASS), and serine 118. Glycine 79 is a binding site for anthranilate. Serine 91 lines the Mg(2+) pocket. Position 109 (asparagine 109) interacts with anthranilate. Arginine 164 contacts anthranilate. Residues aspartate 223 and glutamate 224 each coordinate Mg(2+).

The protein belongs to the anthranilate phosphoribosyltransferase family. In terms of assembly, homodimer. Mg(2+) is required as a cofactor.

The enzyme catalyses N-(5-phospho-beta-D-ribosyl)anthranilate + diphosphate = 5-phospho-alpha-D-ribose 1-diphosphate + anthranilate. The protein operates within amino-acid biosynthesis; L-tryptophan biosynthesis; L-tryptophan from chorismate: step 2/5. In terms of biological role, catalyzes the transfer of the phosphoribosyl group of 5-phosphorylribose-1-pyrophosphate (PRPP) to anthranilate to yield N-(5'-phosphoribosyl)-anthranilate (PRA). The chain is Anthranilate phosphoribosyltransferase from Metallosphaera sedula (strain ATCC 51363 / DSM 5348 / JCM 9185 / NBRC 15509 / TH2).